We begin with the raw amino-acid sequence, 680 residues long: Collagen alpha-1(X) chain (680 aa).

Positions 1-18 are cleaved as a signal peptide; that stretch reads MLPQIPFLLLMFLTLVHG. Positions 19–56 are nonhelical region (NC2); it reads MFYAERYQTPTGIKGPLASPKTQYFIPYAIKSKGIPVR. Residues 54–531 form a disordered region; sequence PVRGEQGIPG…PDGFIKAGQR (478 aa). Residues 57–519 form a triple-helical region region; that stretch reads GEQGIPGPPG…PGPPGPPGQA (463 aa). Composition is skewed to pro residues over residues 137 to 147 and 207 to 216; these read PRGPPGPPGIP and PQGPIGPPGP. Composition is skewed to low complexity over residues 303–321, 373–382, and 391–409; these read LPGL…APGA, PGARGARGPP, and PGEP…PGQK. The span at 410–419 shows a compositional bias: gly residues; it reads GDPGVGGTPG. 2 stretches are compositionally biased toward low complexity: residues 423–433 and 442–453; these read PVGPVGAKGVP and RGEPGIPGTRGP. Positions 506–516 are enriched in pro residues; that stretch reads LPGPPGPPGPP. The interval 520–680 is nonhelical region (NC1); sequence VMPDGFIKAG…SFSGFLVAPM (161 aa). Positions 547 to 680 constitute a C1q domain; that stretch reads TGMPVSAFTV…SFSGFLVAPM (134 aa). Ca(2+) is bound by residues Asp626, Glu627, Leu633, and Asp634.

As to quaternary structure, homotrimer. Post-translationally, prolines at the third position of the tripeptide repeating unit (G-X-Y) are hydroxylated in some or all of the chains.

Its subcellular location is the secreted. The protein localises to the extracellular space. It is found in the extracellular matrix. Type X collagen is a product of hypertrophic chondrocytes and has been localized to presumptive mineralization zones of hyaline cartilage. The polypeptide is Collagen alpha-1(X) chain (Col10a1) (Mus musculus (Mouse)).